Reading from the N-terminus, the 698-residue chain is DNA ligase (698 aa).

Residues 47–51 (DAQYD), 96–97 (SL), and glutamate 128 each bind NAD(+). Lysine 130 acts as the N6-AMP-lysine intermediate in catalysis. NAD(+) contacts are provided by arginine 151, glutamate 186, lysine 303, and lysine 327. Cysteine 422, cysteine 425, cysteine 440, and cysteine 446 together coordinate Zn(2+). Positions 620-698 (GDNLLLSNQT…EEEWIKMVNE (79 aa)) constitute a BRCT domain.

The protein belongs to the NAD-dependent DNA ligase family. LigA subfamily. It depends on Mg(2+) as a cofactor. Mn(2+) serves as cofactor.

The enzyme catalyses NAD(+) + (deoxyribonucleotide)n-3'-hydroxyl + 5'-phospho-(deoxyribonucleotide)m = (deoxyribonucleotide)n+m + AMP + beta-nicotinamide D-nucleotide.. DNA ligase that catalyzes the formation of phosphodiester linkages between 5'-phosphoryl and 3'-hydroxyl groups in double-stranded DNA using NAD as a coenzyme and as the energy source for the reaction. It is essential for DNA replication and repair of damaged DNA. In Orientia tsutsugamushi (strain Boryong) (Rickettsia tsutsugamushi), this protein is DNA ligase.